A 420-amino-acid polypeptide reads, in one-letter code: ATP phosphoribosyltransferase regulatory subunit (420 aa).

It belongs to the class-II aminoacyl-tRNA synthetase family. HisZ subfamily. Heteromultimer composed of HisG and HisZ subunits.

The protein resides in the cytoplasm. It participates in amino-acid biosynthesis; L-histidine biosynthesis; L-histidine from 5-phospho-alpha-D-ribose 1-diphosphate: step 1/9. In terms of biological role, required for the first step of histidine biosynthesis. May allow the feedback regulation of ATP phosphoribosyltransferase activity by histidine. This Bacillus cereus (strain ZK / E33L) protein is ATP phosphoribosyltransferase regulatory subunit.